The following is a 1150-amino-acid chain: Pesticidal crystal protein Cry9Ea (1150 aa).

This sequence belongs to the delta endotoxin family.

Its function is as follows. Promotes colloidosmotic lysis by binding to the midgut epithelial cells of insects. This is Pesticidal crystal protein Cry9Ea (cry9Ea) from Bacillus thuringiensis subsp. aizawai.